The sequence spans 567 residues: 2-succinyl-5-enolpyruvyl-6-hydroxy-3-cyclohexene-1-carboxylate synthase (567 aa).

The protein belongs to the TPP enzyme family. MenD subfamily. In terms of assembly, homodimer. Requires Mg(2+) as cofactor. The cofactor is Mn(2+). It depends on thiamine diphosphate as a cofactor.

It carries out the reaction isochorismate + 2-oxoglutarate + H(+) = 5-enolpyruvoyl-6-hydroxy-2-succinyl-cyclohex-3-ene-1-carboxylate + CO2. It functions in the pathway quinol/quinone metabolism; 1,4-dihydroxy-2-naphthoate biosynthesis; 1,4-dihydroxy-2-naphthoate from chorismate: step 2/7. It participates in quinol/quinone metabolism; menaquinone biosynthesis. Catalyzes the thiamine diphosphate-dependent decarboxylation of 2-oxoglutarate and the subsequent addition of the resulting succinic semialdehyde-thiamine pyrophosphate anion to isochorismate to yield 2-succinyl-5-enolpyruvyl-6-hydroxy-3-cyclohexene-1-carboxylate (SEPHCHC). This Yersinia pestis bv. Antiqua (strain Angola) protein is 2-succinyl-5-enolpyruvyl-6-hydroxy-3-cyclohexene-1-carboxylate synthase.